We begin with the raw amino-acid sequence, 244 residues long: CTD nuclear envelope phosphatase 1 (244 aa).

A helical transmembrane segment spans residues 7-29; it reads LLGLRTFVAFAAKLWSFFIYLLR. Residues 57-224 enclose the FCP1 homology domain; sequence AQVKRKILVL…LNLLPMLDAL (168 aa).

This sequence belongs to the dullard family. (Microbial infection) Interacts with Chandipura virus matrix protein. In terms of assembly, interacts with CNEP1R1; the complex dephosphorylates LPIN1 and LPIN2. Muscle specific with lower expression in other metabolic tissues.

It localises to the endoplasmic reticulum membrane. Its subcellular location is the nucleus membrane. It catalyses the reaction O-phospho-L-seryl-[protein] + H2O = L-seryl-[protein] + phosphate. The enzyme catalyses O-phospho-L-threonyl-[protein] + H2O = L-threonyl-[protein] + phosphate. Functionally, serine/threonine protein phosphatase forming with CNEP1R1 an active phosphatase complex that dephosphorylates and may activate LPIN1 and LPIN2. LPIN1 and LPIN2 are phosphatidate phosphatases that catalyze the conversion of phosphatidic acid to diacylglycerol and control the metabolism of fatty acids at different levels. May indirectly modulate the lipid composition of nuclear and/or endoplasmic reticulum membranes and be required for proper nuclear membrane morphology and/or dynamics. May also indirectly regulate the production of lipid droplets and triacylglycerol. May antagonize BMP signaling. The polypeptide is CTD nuclear envelope phosphatase 1 (CTDNEP1) (Homo sapiens (Human)).